A 571-amino-acid polypeptide reads, in one-letter code: Proline--tRNA ligase (571 aa).

This sequence belongs to the class-II aminoacyl-tRNA synthetase family. ProS type 1 subfamily. In terms of assembly, homodimer.

The protein localises to the cytoplasm. It carries out the reaction tRNA(Pro) + L-proline + ATP = L-prolyl-tRNA(Pro) + AMP + diphosphate. In terms of biological role, catalyzes the attachment of proline to tRNA(Pro) in a two-step reaction: proline is first activated by ATP to form Pro-AMP and then transferred to the acceptor end of tRNA(Pro). As ProRS can inadvertently accommodate and process non-cognate amino acids such as alanine and cysteine, to avoid such errors it has two additional distinct editing activities against alanine. One activity is designated as 'pretransfer' editing and involves the tRNA(Pro)-independent hydrolysis of activated Ala-AMP. The other activity is designated 'posttransfer' editing and involves deacylation of mischarged Ala-tRNA(Pro). The misacylated Cys-tRNA(Pro) is not edited by ProRS. This Vibrio parahaemolyticus serotype O3:K6 (strain RIMD 2210633) protein is Proline--tRNA ligase.